A 738-amino-acid polypeptide reads, in one-letter code: Isocitrate dehydrogenase [NADP] (738 aa).

Residues Asn83 and Ser85 each contribute to the NADP(+) site. D-threo-isocitrate is bound by residues Ser130, Asn133, Arg137, Arg143, and Lys253. Asn133 serves as a coordination point for NADP(+). Asp346 contacts Mg(2+). Residues Tyr416 and Arg543 each coordinate D-threo-isocitrate. Residues Asp544 and Asp548 each contribute to the Mg(2+) site. 5 residues coordinate NADP(+): Gly580, His585, Arg596, Asp598, and Arg645.

The protein belongs to the monomeric-type IDH family. Monomer. Mg(2+) is required as a cofactor. It depends on Mn(2+) as a cofactor.

It is found in the cytoplasm. It catalyses the reaction D-threo-isocitrate + NADP(+) = 2-oxoglutarate + CO2 + NADPH. Weakly inhibited by oxaloacetate, 2-oxoglutarate and citrate. Severely inhibited by oxaloacetate plus glyoxylate. Catalyzes the oxidative decarboxylation of isocitrate to 2-oxoglutarate and carbon dioxide with the concomitant reduction of NADP(+). Cannot use NAD(+). In Corynebacterium glutamicum (strain ATCC 13032 / DSM 20300 / JCM 1318 / BCRC 11384 / CCUG 27702 / LMG 3730 / NBRC 12168 / NCIMB 10025 / NRRL B-2784 / 534), this protein is Isocitrate dehydrogenase [NADP].